We begin with the raw amino-acid sequence, 357 residues long: Malonyl CoA reductase (NADP) (357 aa).

13 to 16 (TGLV) contacts NADP(+). The active-site Acyl-thioester intermediate is the C150. An NADP(+)-binding site is contributed by 180–181 (SG). H245 (proton acceptor) is an active-site residue. Residue 332 to 333 (NT) participates in NADP(+) binding.

It belongs to the aspartate-semialdehyde dehydrogenase family. Homotetramer.

It catalyses the reaction 3-oxopropanoate + NADP(+) + CoA = malonyl-CoA + NADPH + H(+). Its function is as follows. Catalyzes the reduction of malonyl-CoA to malonate semialdehyde, a key step in the 3-hydroxypropanoate and the 3-hydroxypropanoate/4-hydroxybutyrate cycles. This chain is Malonyl CoA reductase (NADP), found in Metallosphaera sedula (strain ATCC 51363 / DSM 5348 / JCM 9185 / NBRC 15509 / TH2).